A 361-amino-acid chain; its full sequence is Protein RecA (361 aa).

77–84 serves as a coordination point for ATP; sequence GPESSGKT.

Belongs to the RecA family.

The protein localises to the cytoplasm. Can catalyze the hydrolysis of ATP in the presence of single-stranded DNA, the ATP-dependent uptake of single-stranded DNA by duplex DNA, and the ATP-dependent hybridization of homologous single-stranded DNAs. It interacts with LexA causing its activation and leading to its autocatalytic cleavage. This is Protein RecA from Rhizobium etli.